Here is a 261-residue protein sequence, read N- to C-terminus: Putative hydro-lyase SAR11_0660 (261 aa).

The protein belongs to the D-glutamate cyclase family.

In Pelagibacter ubique (strain HTCC1062), this protein is Putative hydro-lyase SAR11_0660.